Reading from the N-terminus, the 200-residue chain is NAD(P)H dehydrogenase (quinone) (200 aa).

The Flavodoxin-like domain maps to 4 to 191 (VLVLYYSSYG…DIARYQGKHV (188 aa)). FMN is bound by residues 10-15 (SSYGHV) and 79-81 (TRF). Tyr12 is an NAD(+) binding site. Trp99 serves as a coordination point for substrate. FMN-binding positions include 114 to 120 (STGTQHG) and His135.

It belongs to the WrbA family. It depends on FMN as a cofactor.

It catalyses the reaction a quinone + NADH + H(+) = a quinol + NAD(+). The enzyme catalyses a quinone + NADPH + H(+) = a quinol + NADP(+). This Burkholderia multivorans (strain ATCC 17616 / 249) protein is NAD(P)H dehydrogenase (quinone).